A 263-amino-acid chain; its full sequence is Hydroxyethylthiazole kinase 1 (263 aa).

Position 42 (methionine 42) interacts with substrate. 2 residues coordinate ATP: lysine 118 and threonine 164. Glycine 191 serves as a coordination point for substrate.

The protein belongs to the Thz kinase family. Requires Mg(2+) as cofactor.

It catalyses the reaction 5-(2-hydroxyethyl)-4-methylthiazole + ATP = 4-methyl-5-(2-phosphooxyethyl)-thiazole + ADP + H(+). Its pathway is cofactor biosynthesis; thiamine diphosphate biosynthesis; 4-methyl-5-(2-phosphoethyl)-thiazole from 5-(2-hydroxyethyl)-4-methylthiazole: step 1/1. Catalyzes the phosphorylation of the hydroxyl group of 4-methyl-5-beta-hydroxyethylthiazole (THZ). The protein is Hydroxyethylthiazole kinase 1 of Clostridium botulinum (strain Kyoto / Type A2).